A 265-amino-acid polypeptide reads, in one-letter code: Neuronal membrane glycoprotein M6-b (265 aa).

A helical membrane pass occupies residues 31 to 51 (GGVPYASLVATILCFSGVALF). N-linked (GlcNAc...) asparagine glycosylation is present at Asn-73. A run of 2 helical transmembrane segments spans residues 90 to 110 (VIYG…AEGF) and 136 to 156 (FVFL…FSAV). The N-linked (GlcNAc...) asparagine glycan is linked to Asn-177. Residues 224–244 (LFIVACAGAGATVIALLIYMM) form a helical membrane-spanning segment. Residue Ser-257 is modified to Phosphoserine.

It belongs to the myelin proteolipid protein family. As to quaternary structure, interacts with SERT. As to expression, highly expressed in the ventral medullary surface, moderately in the cerebral cortex and cerebellum, poorly in lung and kidney, and not at all in heart, skeletal muscle, liver, stomach or stomach.

Its subcellular location is the membrane. The protein localises to the cell membrane. Functionally, may be involved in neural development. Involved in regulation of osteoblast function and bone formation. Involved in matrix vesicle release by osteoblasts; this function seems to involve maintenance of the actin cytoskeleton. May be involved in cellular trafficking of SERT and thereby in regulation of serotonin uptake. This is Neuronal membrane glycoprotein M6-b (Gpm6b) from Rattus norvegicus (Rat).